A 75-amino-acid polypeptide reads, in one-letter code: Kappa-scoloptoxin(03)-Ssm1d (75 aa).

The first 23 residues, 1–23 (MKLSMAILLVMALIIFTLDKNYS), serve as a signal peptide directing secretion.

It belongs to the scoloptoxin-03 family. Post-translationally, contains 3 disulfide bonds. In terms of tissue distribution, expressed by the venom gland.

The protein localises to the secreted. Inhibits voltage-gated potassium channels. This is Kappa-scoloptoxin(03)-Ssm1d from Scolopendra mutilans (Chinese red-headed centipede).